Consider the following 150-residue polypeptide: Clitocypin (150 aa).

Belongs to the protease inhibitor I48 family. In terms of assembly, homodimer. Uniformly expressed throughout the mature fruiting body (at mRNA and protein level).

Functionally, binds and inhibits cysteine proteinases. Inhibits most strongly papain and cathepsin L, more weakly bromelain and cathepsin B while it is completely ineffective against cathepsin H. The chain is Clitocypin (Cnc1) from Clitocybe nebularis (Clouded agaric).